Here is a 93-residue protein sequence, read N- to C-terminus: MKTLVLLSALVLLAFQVQADPIQNTDEETKTEEQPGEEDQAVSVSFGDPEGSSLQEESLRDLVCYCRKRGCKRREHMNGTCRKGHLLYMLCCR.

Positions 1-19 are cleaved as a signal peptide; the sequence is MKTLVLLSALVLLAFQVQA. Residues 20-58 constitute a propeptide that is removed on maturation; that stretch reads DPIQNTDEETKTEEQPGEEDQAVSVSFGDPEGSSLQEES. The tract at residues 23–56 is disordered; it reads QNTDEETKTEEQPGEEDQAVSVSFGDPEGSSLQE. Cystine bridges form between Cys64/Cys92, Cys66/Cys81, and Cys71/Cys91.

Belongs to the alpha-defensin family. In terms of tissue distribution, paneth cells of the small bowel.

The protein localises to the secreted. Probably contributes to the antimicrobial barrier function of the small bowel mucosa. The sequence is that of Alpha-defensin 9 (Defa9) from Mus musculus (Mouse).